Reading from the N-terminus, the 392-residue chain is 5-amino-6-(D-ribitylamino)uracil--L-tyrosine 4-hydroxyphenyl transferase (392 aa).

Residues 60–307 (VTYVVNRNIN…MAIARLYLGK (248 aa)) enclose the Radical SAM core domain. Positions 74, 78, and 81 each coordinate [4Fe-4S] cluster.

It belongs to the radical SAM superfamily. CofH family. Consists of two subunits, CofG and CofH. [4Fe-4S] cluster is required as a cofactor.

It carries out the reaction 5-amino-6-(D-ribitylamino)uracil + L-tyrosine + S-adenosyl-L-methionine = 5-amino-5-(4-hydroxybenzyl)-6-(D-ribitylimino)-5,6-dihydrouracil + 2-iminoacetate + 5'-deoxyadenosine + L-methionine + H(+). The protein operates within cofactor biosynthesis; coenzyme F0 biosynthesis. In terms of biological role, catalyzes the radical-mediated synthesis of 5-amino-5-(4-hydroxybenzyl)-6-(D-ribitylimino)-5,6-dihydrouracil from 5-amino-6-(D-ribitylamino)uracil and L-tyrosine. This is 5-amino-6-(D-ribitylamino)uracil--L-tyrosine 4-hydroxyphenyl transferase from Synechocystis sp. (strain ATCC 27184 / PCC 6803 / Kazusa).